The chain runs to 264 residues: Thymidylate synthase (264 aa).

R21 is a binding site for dUMP. (6R)-5,10-methylene-5,6,7,8-tetrahydrofolate is bound at residue H51. Residue 126–127 (RR) participates in dUMP binding. Residue C146 is the Nucleophile of the active site. Residues 166–169 (RSAD), N177, and 207–209 (HLY) each bind dUMP. Residue D169 coordinates (6R)-5,10-methylene-5,6,7,8-tetrahydrofolate. Position 263 (A263) interacts with (6R)-5,10-methylene-5,6,7,8-tetrahydrofolate.

This sequence belongs to the thymidylate synthase family. Bacterial-type ThyA subfamily. Homodimer.

It localises to the cytoplasm. It catalyses the reaction dUMP + (6R)-5,10-methylene-5,6,7,8-tetrahydrofolate = 7,8-dihydrofolate + dTMP. Its pathway is pyrimidine metabolism; dTTP biosynthesis. Functionally, catalyzes the reductive methylation of 2'-deoxyuridine-5'-monophosphate (dUMP) to 2'-deoxythymidine-5'-monophosphate (dTMP) while utilizing 5,10-methylenetetrahydrofolate (mTHF) as the methyl donor and reductant in the reaction, yielding dihydrofolate (DHF) as a by-product. This enzymatic reaction provides an intracellular de novo source of dTMP, an essential precursor for DNA biosynthesis. This chain is Thymidylate synthase, found in Azoarcus sp. (strain BH72).